The chain runs to 552 residues: Sensor histidine kinase DpiB (552 aa).

Residues 1–21 (MLQLNENKQFAFFQRLAFPLR) are Cytoplasmic-facing. Residues 22–42 (IFLLILVFSIFVIAALAQYFT) traverse the membrane as a helical segment. The Periplasmic segment spans residues 43–182 (ASFEDYLTLH…DSWRAEFLLP (140 aa)). The helical transmembrane segment at 183–203 (MAGVFVVLLGILMLLSWFLAA) threads the bilayer. Residues 204 to 552 (HIRRQMMGME…NDSSINPIDR (349 aa)) lie on the Cytoplasmic side of the membrane. In terms of domain architecture, PAS spans 222 to 292 (RQQEALFSSV…IDEKRQDVVA (71 aa)). Residues 344–541 (TLRHEHLNWM…LFSIYIPKVK (198 aa)) form the Histidine kinase domain. His-347 is subject to Phosphohistidine; by autocatalysis.

Autophosphorylated.

It localises to the cell inner membrane. It catalyses the reaction ATP + protein L-histidine = ADP + protein N-phospho-L-histidine.. With respect to regulation, autophosphorylation is induced in vitro by dithiothreitol (DTT). Its function is as follows. Member of the two-component regulatory system DpiA/DpiB, which is essential for expression of citrate-specific fermentation genes and genes involved in plasmid inheritance. Could be involved in response to both the presence of citrate and external redox conditions. Functions as a sensor kinase that phosphorylates DpiA in the presence of citrate. This chain is Sensor histidine kinase DpiB (dpiB), found in Escherichia coli (strain K12).